Here is a 389-residue protein sequence, read N- to C-terminus: S-adenosylmethionine synthase (389 aa).

His15 provides a ligand contact to ATP. A Mg(2+)-binding site is contributed by Asp17. Glu43 contacts K(+). 2 residues coordinate L-methionine: Glu56 and Gln99. The flexible loop stretch occupies residues 99 to 109 (QSPDIAQGVNE). ATP-binding positions include 166–168 (DAK), 234–235 (RF), Asp243, 249–250 (RK), Ala266, and Lys270. Position 243 (Asp243) interacts with L-methionine. Lys274 contacts L-methionine.

It belongs to the AdoMet synthase family. Homotetramer; dimer of dimers. The cofactor is Mg(2+). It depends on K(+) as a cofactor.

It localises to the cytoplasm. It carries out the reaction L-methionine + ATP + H2O = S-adenosyl-L-methionine + phosphate + diphosphate. It functions in the pathway amino-acid biosynthesis; S-adenosyl-L-methionine biosynthesis; S-adenosyl-L-methionine from L-methionine: step 1/1. Its function is as follows. Catalyzes the formation of S-adenosylmethionine (AdoMet) from methionine and ATP. The overall synthetic reaction is composed of two sequential steps, AdoMet formation and the subsequent tripolyphosphate hydrolysis which occurs prior to release of AdoMet from the enzyme. This chain is S-adenosylmethionine synthase, found in Laribacter hongkongensis (strain HLHK9).